Consider the following 101-residue polypeptide: uncharacterized protein (101 aa).

A compositionally biased stretch (low complexity) spans 65–79 (QEAAAPAGPQEPAEA). The segment at 65–101 (QEAAAPAGPQEPAEASGDAGKKEEVEEEEIEIDFGMF) is disordered. Residues 89–101 (VEEEEIEIDFGMF) show a composition bias toward acidic residues.

This is an uncharacterized protein from Encephalitozoon cuniculi (strain GB-M1) (Microsporidian parasite).